Consider the following 302-residue polypeptide: Genome polyprotein (302 aa).

Residues 28–46 show a composition bias toward basic and acidic residues; that stretch reads ENLDTGKDSKKDTSGKGDK. The tract at residues 28 to 72 is disordered; sequence ENLDTGKDSKKDTSGKGDKPQNSQTGQGSKEQTKIGTVSKDVNVG. A compositionally biased stretch (polar residues) spans 47–63; that stretch reads PQNSQTGQGSKEQTKIG.

Belongs to the potyviridae genome polyprotein family. In terms of processing, genome polyprotein of potyviruses undergoes post-translational proteolytic processing by the main proteinase NIa-pro resulting in the production of at least ten individual proteins. The P1 proteinase and the HC-pro cleave only their respective C-termini autocatalytically. 6K1 is essential for proper proteolytic separation of P3 from CI.

Its subcellular location is the virion. It catalyses the reaction RNA(n) + a ribonucleoside 5'-triphosphate = RNA(n+1) + diphosphate. Functionally, an RNA-dependent RNA polymerase that plays an essential role in the virus replication. In terms of biological role, involved in aphid transmission, cell-to-cell and systemis movement, encapsidation of the viral RNA and in the regulation of viral RNA amplification. The protein is Genome polyprotein of Watermelon mosaic virus II (isolate Australia).